The sequence spans 412 residues: Elongation factor 1-gamma 2 (412 aa).

S2 carries the post-translational modification N-acetylserine. The 76-residue stretch at 2 to 77 (SQGTLYINRS…YLANQVADEK (76 aa)) folds into the GST N-terminal domain. The region spanning 86–217 (DVIEKSQILR…AEKALTYTPP (132 aa)) is the GST C-terminal domain. The segment at 216-253 (PPKKQKAEKPKAEKSKAEKKKDEAKPADDAAPAKKPKH) is disordered. The span at 220-247 (QKAEKPKAEKSKAEKKKDEAKPADDAAP) shows a compositional bias: basic and acidic residues. In terms of domain architecture, EF-1-gamma C-terminal spans 251-412 (PKHPLEALGK…KEIVDGKVLK (162 aa)).

In terms of assembly, the eukaryotic elongation factor 1 complex (eEF1) is probably a heterohexamer. Two trimeric complexes, each composed of eEF1A (TEF1 or TEF2), eEF1Balpha (EFB1) and eEF1Bgamma (CAM1 or TEF4), are probably dimerized via the eF1Bgamma subunits. The eEF1B subcomplex with the GEF activity is formed of eEF1Balpha and eEF1Bgamma. TEF4 interacts with EFB1.

The protein resides in the cytoplasm. It functions in the pathway protein biosynthesis; polypeptide chain elongation. Functionally, subunit of the eukaryotic elongation factor 1 complex (eEF1). Probably plays a role in anchoring the complex to other cellular components. In Saccharomyces cerevisiae (strain ATCC 204508 / S288c) (Baker's yeast), this protein is Elongation factor 1-gamma 2 (TEF4).